The sequence spans 373 residues: Chaperone protein DnaJ (373 aa).

The J domain occupies 5–70 (DYYEVLGVNR…QKRAAYDQYG (66 aa)). Residues 133 to 211 (GTETKIRIPV…CHGGGRVKQH (79 aa)) form a CR-type zinc finger. C146, C149, C163, C166, C185, C188, C199, and C202 together coordinate Zn(2+). CXXCXGXG motif repeat units follow at residues 146–153 (CETCHGSG), 163–170 (CSTCGGHG), 185–192 (CPKCHGSG), and 199–206 (CPTCHGGG). The segment at 346-373 (LEDINQQDSGKHSPREKSWMTKVKDFFQ) is disordered. Residues 354–373 (SGKHSPREKSWMTKVKDFFQ) show a composition bias toward basic and acidic residues.

This sequence belongs to the DnaJ family. In terms of assembly, homodimer. Requires Zn(2+) as cofactor.

The protein localises to the cytoplasm. In terms of biological role, participates actively in the response to hyperosmotic and heat shock by preventing the aggregation of stress-denatured proteins and by disaggregating proteins, also in an autonomous, DnaK-independent fashion. Unfolded proteins bind initially to DnaJ; upon interaction with the DnaJ-bound protein, DnaK hydrolyzes its bound ATP, resulting in the formation of a stable complex. GrpE releases ADP from DnaK; ATP binding to DnaK triggers the release of the substrate protein, thus completing the reaction cycle. Several rounds of ATP-dependent interactions between DnaJ, DnaK and GrpE are required for fully efficient folding. Also involved, together with DnaK and GrpE, in the DNA replication of plasmids through activation of initiation proteins. The chain is Chaperone protein DnaJ from Methylobacillus flagellatus (strain ATCC 51484 / DSM 6875 / VKM B-1610 / KT).